The following is a 261-amino-acid chain: Type III pantothenate kinase (261 aa).

6 to 13 is a binding site for ATP; that stretch reads DVGNTNTV. 107 to 110 serves as a coordination point for substrate; sequence GADR. Catalysis depends on Asp109, which acts as the Proton acceptor. Asp129 serves as a coordination point for K(+). Thr132 is a binding site for ATP. Thr183 is a binding site for substrate.

This sequence belongs to the type III pantothenate kinase family. In terms of assembly, homodimer. It depends on NH4(+) as a cofactor. Requires K(+) as cofactor.

Its subcellular location is the cytoplasm. It catalyses the reaction (R)-pantothenate + ATP = (R)-4'-phosphopantothenate + ADP + H(+). It functions in the pathway cofactor biosynthesis; coenzyme A biosynthesis; CoA from (R)-pantothenate: step 1/5. In terms of biological role, catalyzes the phosphorylation of pantothenate (Pan), the first step in CoA biosynthesis. The chain is Type III pantothenate kinase from Kosmotoga olearia (strain ATCC BAA-1733 / DSM 21960 / TBF 19.5.1).